The primary structure comprises 280 residues: Four and a half LIM domains protein 3 (280 aa).

At Ser2 the chain carries N-acetylserine. The segment at 7-31 (CAKCNESLYGRKYIQTDSGPYCVPC) adopts a C4-type zinc-finger fold. LIM zinc-binding domains lie at 40-92 (CAEC…CNDC) and 101-153 (CSAC…CVPC). An N6-acetyllysine modification is found at Lys157. 2 consecutive LIM zinc-binding domains span residues 162 to 212 (CARC…CVAC) and 221 to 275 (CSSC…CQGC). Lys235 bears the N6-acetyllysine mark.

In terms of assembly, interacts with SOX15; the interaction recruits FHL3 to FOXK1 promoters where it acts as a transcriptional coactivator of FOXK1. Expressed only in skeletal muscle.

Its subcellular location is the nucleus. It is found in the cytoplasm. Recruited by SOX15 to FOXK1 promoters where it acts as a transcriptional coactivator of FOXK1. This chain is Four and a half LIM domains protein 3 (FHL3), found in Homo sapiens (Human).